Here is a 301-residue protein sequence, read N- to C-terminus: Phosphonates import ATP-binding protein PhnC (301 aa).

The region spanning 8-256 (IRIERLSKTF…LLKTLYGDEA (249 aa)) is the ABC transporter domain. An ATP-binding site is contributed by 41-48 (GASGSGKS). A disordered region spans residues 264–287 (AQGPDDTESKNTADNTPLQDAAPA).

Belongs to the ABC transporter superfamily. Phosphonates importer (TC 3.A.1.9.1) family. In terms of assembly, the complex is composed of two ATP-binding proteins (PhnC), two transmembrane proteins (PhnE) and a solute-binding protein (PhnD).

The protein localises to the cell inner membrane. The enzyme catalyses phosphonate(out) + ATP + H2O = phosphonate(in) + ADP + phosphate + H(+). Part of the ABC transporter complex PhnCDE involved in phosphonates import. Responsible for energy coupling to the transport system. The polypeptide is Phosphonates import ATP-binding protein PhnC (Paraburkholderia xenovorans (strain LB400)).